Consider the following 1032-residue polypeptide: MKMADAKQKRNEQLKRWIGSETDLEPPVVKRQKTKVKFDDGAVFLAACSSGDTDEVLKLLHRGADINYANVDGLTALHQACIDDNVDMVKFLVENGANINQPDNEGWIPLHAAASCGYLDIAEFLIGQGAHVGAVNSEGDTPLDIAEEEAMEELLQNEVNRQGVDIEAARKEEERIMLRDARQWLNSGHISDVRHAKSGGTALHVAAAKGYTEVLKLLIQAGYDVNIKDYDGWTPLHAAAHWGKEEACRILVDNLCDMETVNKVGQTAFDVADEDILGYLEELQKKQNLLHSEKRDKKSPLIESTANMENNQPQKTFKNKETLIIEPEKNASRIESLEQEKADEEEEGKKDESSCSSEEDEEDDSESEAETDKTKPMASVTNAHTASTQAAPAAVTTPTLSSNQGTPTSPVKKFPTSTTKISPKEEERKDESPASWRLGLRKTGSYGALAEITASKEAQKEKDTAGVIRSASSPRLSSSLDNKEKEKDNKGTRLAYVAPTIPRRLGSTSDIEEKENRESSNLRTSSSYTRRKWEDDLKKNSSINEGSTYHRSCSFGRRQDDLISCSVPSTTSTPTVTSAAGLQKSFLSSTSTTAKTPPGSSPAGTQSSTSNRLWAEDSTEKEKDSAPTAATILVAPTVVSAAASSTTALTTTTAGTLSSTSEVRERRRSYLTPVRDEESESQRKARSRQARQSRRSTQGVTLTDLQEAEKTIGRSRSTRTREQENEEKDKEEKEKQDKEKQEEKKESEVSREDEYKQKYSRTYDETYARYRPVSTSSSSTPSSSSLSTLGSSLYASSQLNRPNSLVGITSAYSRGLTKDNEREGEKKEEEKEGEDKSQPKSIRERRRPREKRRSTGVSFWTQDSDENEQERQSDTEDGSSKRDTQTDSVSRYDSSSTSSSDRYDSLLGRSASYSYLEERKPYGSRLEKDDSTDFKKLYEQILAENEKLKAQLHDTNMELTDLKLQLEKATQRQERFADRSLLEMEKRERRALERRISEMEEELKMLPDLKADNQRLKDENGALIRVISKLSK.

Positions 35-38 (KVKF) match the KVKF motif motif. 6 ANK repeats span residues 39–68 (DDGA…DINY), 72–101 (DGLT…NINQ), 105–134 (EGWI…HVGA), 138–164 (EGDT…RQGV), 198–227 (SGGT…DVNI), and 231–260 (DGWT…DMET). 2 positions are modified to (3S)-3-hydroxyasparagine; by HIF1AN: N67 and N100. At N226 the chain carries (3S)-3-hydroxyasparagine; by HIF1AN. 2 disordered regions span residues 290 to 553 (LHSE…HRSC) and 588 to 928 (SSTS…RLEK). Residues 291–300 (HSEKRDKKSP) are compositionally biased toward basic and acidic residues. S299 bears the Phosphoserine mark. The span at 302–316 (IESTANMENNQPQKT) shows a compositional bias: polar residues. Positions 318 to 340 (KNKETLIIEPEKNASRIESLEQE) are enriched in basic and acidic residues. Over residues 357-369 (SEEDEEDDSESEA) the composition is skewed to acidic residues. The span at 383-399 (AHTASTQAAPAAVTTPT) shows a compositional bias: low complexity. The segment covering 400-421 (LSSNQGTPTSPVKKFPTSTTKI) has biased composition (polar residues). Phosphoserine is present on residues S422 and S432. The segment covering 422 to 432 (SPKEEERKDES) has biased composition (basic and acidic residues). T443 carries the post-translational modification Phosphothreonine. S445 is subject to Phosphoserine. The residue at position 446 (Y446) is a Phosphotyrosine. The segment covering 469–480 (RSASSPRLSSSL) has biased composition (low complexity). S472 is subject to Phosphoserine; by NUAK1. Position 473 is a phosphoserine; by CDK1 (S473). S477 is subject to Phosphoserine. Positions 481–491 (DNKEKEKDNKG) are enriched in basic and acidic residues. A phosphoserine mark is found at S507 and S509. Polar residues predominate over residues 540–551 (NSSINEGSTYHR). S601 carries the post-translational modification Phosphoserine. Residues 602-612 (PAGTQSSTSNR) show a composition bias toward polar residues. Residues 614 to 625 (WAEDSTEKEKDS) are compositionally biased toward basic and acidic residues. S618 is subject to Phosphoserine. A compositionally biased stretch (low complexity) spans 633-661 (LVAPTVVSAAASSTTALTTTTAGTLSSTS). Positions 674–683 (VRDEESESQR) are enriched in basic and acidic residues. The interaction with ROCK2 stretch occupies residues 683-866 (RKARSRQARQ…VSFWTQDSDE (184 aa)). Residues 684–694 (KARSRQARQSR) are compositionally biased toward basic residues. A phosphoserine; by PKA and PKG; in vitro mark is found at S693 and S696. A Phosphothreonine; by ROCK1, ROCK2, CDC42BP, ZIPK/DAPK3 and RAF1 modification is found at T697. Basic and acidic residues predominate over residues 719–768 (RTREQENEEKDKEEKEKQDKEKQEEKKESEVSREDEYKQKYSRTYDETYA). Residues 774–797 (STSSSSTPSSSSLSTLGSSLYASS) show a composition bias toward low complexity. A compositionally biased stretch (polar residues) spans 798–812 (QLNRPNSLVGITSAY). S804 is modified (phosphoserine). A compositionally biased stretch (basic and acidic residues) spans 816 to 842 (LTKDNEREGEKKEEEKEGEDKSQPKSI). The span at 843-854 (RERRRPREKRRS) shows a compositional bias: basic residues. Phosphoserine; by ROCK2 is present on S854. S864 and S873 each carry phosphoserine. The segment covering 869-885 (QERQSDTEDGSSKRDTQ) has biased composition (basic and acidic residues). Residues 886 to 900 (TDSVSRYDSSSTSSS) are compositionally biased toward low complexity. 2 positions are modified to phosphoserine: S905 and S910. S912 is modified (phosphoserine; by NUAK1). Residues 916–928 (LEERKPYGSRLEK) show a composition bias toward basic and acidic residues. S997 bears the Phosphoserine mark.

In terms of assembly, PP1 comprises a catalytic subunit, PPP1CA, PPP1CB or PPP1CC, and one or several targeting or regulatory subunits. PPP1R12A mediates binding to myosin. Interacts with ARHA and CIT. Binds PPP1R12B, ROCK1 and IL16. Interacts directly with PRKG1. Non-covalent dimer of 2 dimers; PRKG1-PRKG1 and PPP1R12A-PPP1R12A. Interacts with SMTNL1. Interacts with PPP1CB; the interaction is direct. Interacts (when phosphorylated at Ser-445, Ser-472 and Ser-910) with 14-3-3. Interacts with ROCK1 and ROCK2. Interacts with isoform 1 and isoform 2 of ZIPK/DAPK3. Interacts with RAF1. Interacts with HIF1AN. Interacts with NCKAP1L. Phosphorylated on upon DNA damage, probably by ATM or ATR. Phosphorylated by CIT (Rho-associated kinase). Phosphorylated cooperatively by ROCK1 and CDC42BP on Thr-697. In vitro, phosphorylation of Ser-696 by PKA and PKG appears to prevent phosphorylation of the inhibitory site Thr-697, probably mediated by PRKG1. May be phosphorylated at Thr-697 by DMPK; may inhibit the myosin phosphatase activity. Phosphorylated at Ser-473 by CDK1 during mitosis, creating docking sites for the POLO box domains of PLK1. Subsequently, PLK1 binds and phosphorylates PPP1R12A. Smooth muscle. Detected in aorta, portal vein, stomach, intestine, bladder and lung.

It localises to the cytoplasm. The protein resides in the cytoskeleton. The protein localises to the stress fiber. Key regulator of protein phosphatase 1C (PPP1C). Mediates binding to myosin. As part of the PPP1C complex, involved in dephosphorylation of PLK1. Capable of inhibiting HIF1AN-dependent suppression of HIF1A activity. The protein is Protein phosphatase 1 regulatory subunit 12A of Rattus norvegicus (Rat).